Reading from the N-terminus, the 66-residue chain is Large ribosomal subunit protein bL33c (66 aa).

This sequence belongs to the bacterial ribosomal protein bL33 family.

It is found in the plastid. The protein resides in the chloroplast. In Aethionema grandiflorum (Persian stone-cress), this protein is Large ribosomal subunit protein bL33c.